The sequence spans 328 residues: Deoxynucleotidyltransferase terminal-interacting protein 1 (328 aa).

Disordered regions lie at residues 1–30 (MGAT…GAAG) and 142–176 (ELPG…HVLS). Over residues 12-22 (GPGGAERGGLE) the composition is skewed to gly residues. The interval 56–147 (MTTSFTDPAI…RLAHELPGIK (92 aa)) is important for dimerization. Over residues 142–158 (ELPGIKRGRQAEEESHR) the composition is skewed to basic and acidic residues. A DNA-binding region (a.T hook) is located at residues 158 to 172 (RGSPIPKKRKGRPPG). The residue at position 160 (S160) is a Phosphoserine. Residues 163–169 (PKKRKGR) carry the Nuclear localization signal motif. The important for DNA and nucleosome binding stretch occupies residues 196–315 (REGPKWDPAR…MRKYMETLRT (120 aa)). The segment at residues 215 to 236 (GSRANKALGMGGTRGRIYIKHP) is a DNA-binding region (H-T-H motif).

Monomer and homodimer. A minor proportion may form homotrimers. Interacts with ZNF541. Interacts with the terminal deoxynucleotidyltransferase DNTT. Interacts with TRERF1. Identified in a histone deacetylase complex that contains DNTTIP1, HDAC1 and MIDEAS; this complex assembles into a tetramer that contains four copies of each protein chain. Component of a histone deacetylase complex containing DNTTIP1, ZNF541, HDAC1 and HDAC2. Identified in a complex with KCTD19, HDAC1, HDAC2 and ZNF541.

It is found in the nucleus. Increases DNTT terminal deoxynucleotidyltransferase activity (in vitro). Also acts as a transcriptional regulator, binding to the consensus sequence 5'-GNTGCATG-3' following an AT-tract. Associates with RAB20 promoter and positively regulates its transcription. Binds DNA and nucleosomes; may recruit HDAC1 complexes to nucleosomes or naked DNA. The protein is Deoxynucleotidyltransferase terminal-interacting protein 1 (Dnttip1) of Mus musculus (Mouse).